A 1055-amino-acid chain; its full sequence is Type I restriction enzyme HindI endonuclease subunit (1055 aa).

Residues Thr287–Ile468 form the Helicase ATP-binding domain.

It belongs to the HsdR family. As to quaternary structure, the type I restriction/modification system is composed of three polypeptides R, M and S; the restriction enzyme has stoichiometry R(2)M(2)S(1) while the methyltransferase is M(2)S(1).

The enzyme catalyses Endonucleolytic cleavage of DNA to give random double-stranded fragments with terminal 5'-phosphates, ATP is simultaneously hydrolyzed.. The restriction (R) subunit of a type I restriction enzyme that recognizes 5'-RAACN(5)TAG-3' and cleaves a random distance away. Subunit R is required for both nuclease and ATPase activities, but not for modification. After locating a non-methylated recognition site, the enzyme complex serves as a molecular motor that translocates DNA in an ATP-dependent manner until a collision occurs that triggers cleavage. The polypeptide is Type I restriction enzyme HindI endonuclease subunit (Haemophilus influenzae (strain ATCC 51907 / DSM 11121 / KW20 / Rd)).